We begin with the raw amino-acid sequence, 483 residues long: Aspartyl/glutamyl-tRNA(Asn/Gln) amidotransferase subunit B (483 aa).

It belongs to the GatB/GatE family. GatB subfamily. Heterotrimer of A, B and C subunits.

The enzyme catalyses L-glutamyl-tRNA(Gln) + L-glutamine + ATP + H2O = L-glutaminyl-tRNA(Gln) + L-glutamate + ADP + phosphate + H(+). It carries out the reaction L-aspartyl-tRNA(Asn) + L-glutamine + ATP + H2O = L-asparaginyl-tRNA(Asn) + L-glutamate + ADP + phosphate + 2 H(+). Functionally, allows the formation of correctly charged Asn-tRNA(Asn) or Gln-tRNA(Gln) through the transamidation of misacylated Asp-tRNA(Asn) or Glu-tRNA(Gln) in organisms which lack either or both of asparaginyl-tRNA or glutaminyl-tRNA synthetases. The reaction takes place in the presence of glutamine and ATP through an activated phospho-Asp-tRNA(Asn) or phospho-Glu-tRNA(Gln). The protein is Aspartyl/glutamyl-tRNA(Asn/Gln) amidotransferase subunit B of Rickettsia africae (strain ESF-5).